The following is a 513-amino-acid chain: Na(+)/H(+) antiporter NhaB (513 aa).

A run of 12 helical transmembrane segments spans residues 23 to 43 (LALI…PFVA), 52 to 72 (IFTL…LLAI), 97 to 117 (LLLM…LFIF), 120 to 140 (LLLS…AAAF), 144 to 164 (FLDA…FYGI), 202 to 222 (LMMH…VGEP), 238 to 258 (FFLR…LTCL), 303 to 323 (AIIG…VGLI), 348 to 368 (TESL…AVII), 391 to 411 (LFYI…VGTI), 447 to 467 (ATPN…APLI), and 475 to 495 (VWMA…CVEF).

It belongs to the NhaB Na(+)/H(+) (TC 2.A.34) antiporter family.

Its subcellular location is the cell inner membrane. The enzyme catalyses 2 Na(+)(in) + 3 H(+)(out) = 2 Na(+)(out) + 3 H(+)(in). Functionally, na(+)/H(+) antiporter that extrudes sodium in exchange for external protons. In Escherichia coli O6:H1 (strain CFT073 / ATCC 700928 / UPEC), this protein is Na(+)/H(+) antiporter NhaB.